We begin with the raw amino-acid sequence, 201 residues long: Recombination protein RecR (201 aa).

A C4-type zinc finger spans residues 57 to 74 (CRICGFITSKDDDPCVIC). The region spanning 82–178 (SKIFVVENSQ…KVTRLARGLS (97 aa)) is the Toprim domain.

It belongs to the RecR family.

May play a role in DNA repair. It seems to be involved in an RecBC-independent recombinational process of DNA repair. It may act with RecF and RecO. The protein is Recombination protein RecR of Oenococcus oeni (strain ATCC BAA-331 / PSU-1).